The chain runs to 602 residues: Elongation factor 4 (602 aa).

One can recognise a tr-type G domain in the interval 2–184 (NHIRNFSIIA…AVVAKVPPPK (183 aa)). GTP is bound by residues 14-19 (DHGKST) and 131-134 (NKMD).

This sequence belongs to the TRAFAC class translation factor GTPase superfamily. Classic translation factor GTPase family. LepA subfamily.

The protein resides in the cell inner membrane. The enzyme catalyses GTP + H2O = GDP + phosphate + H(+). Functionally, required for accurate and efficient protein synthesis under certain stress conditions. May act as a fidelity factor of the translation reaction, by catalyzing a one-codon backward translocation of tRNAs on improperly translocated ribosomes. Back-translocation proceeds from a post-translocation (POST) complex to a pre-translocation (PRE) complex, thus giving elongation factor G a second chance to translocate the tRNAs correctly. Binds to ribosomes in a GTP-dependent manner. The chain is Elongation factor 4 from Delftia acidovorans (strain DSM 14801 / SPH-1).